The following is a 363-amino-acid chain: Beta-1,3-N-acetylglucosaminyltransferase lunatic fringe (363 aa).

The Cytoplasmic portion of the chain corresponds to 1–8; sequence MLKSCGRK. A helical; Signal-anchor for type II membrane protein transmembrane segment spans residues 9–29; it reads LLLSLVGSMFTCLLVLMVEPP. Over 30 to 363 the chain is Lumenal; it reads GRPGLARGEA…TPWCPSNVVY (334 aa). R113 is a substrate binding site. A glycan (N-linked (GlcNAc...) asparagine) is linked at N151. Disulfide bonds link C152–C163 and C181–C244. D185 is a substrate binding site. Mn(2+) is bound at residue D186. Residue D274 is part of the active site. Residue H298 coordinates Mn(2+). C348 and C357 are disulfide-bonded.

Belongs to the glycosyltransferase 31 family. Mn(2+) is required as a cofactor. Co(2+) serves as cofactor. In terms of processing, a soluble form may be derived from the membrane form by proteolytic processing.

Its subcellular location is the golgi apparatus membrane. It carries out the reaction 3-O-(alpha-L-fucosyl)-L-threonyl-[EGF-like domain protein] + UDP-N-acetyl-alpha-D-glucosamine = 3-O-(N-acetyl-beta-D-glucosaminyl-(1-&gt;3)-alpha-L-fucosyl)-L-threonyl-[EGF-like domain protein] + UDP + H(+). It catalyses the reaction 3-O-(alpha-L-fucosyl)-L-seryl-[EGF-like domain protein] + UDP-N-acetyl-alpha-D-glucosamine = 3-O-(N-acetyl-beta-D-glucosaminyl-(1-&gt;3)-alpha-L-fucosyl)-L-seryl-[EGF-like domain protein] + UDP + H(+). Glycosyltransferase that initiates the elongation of O-linked fucose residues attached to EGF-like repeats in the extracellular domain of Notch molecules. Essential mediator of somite segmentation and patterning. The protein is Beta-1,3-N-acetylglucosaminyltransferase lunatic fringe (LFNG) of Gallus gallus (Chicken).